The primary structure comprises 248 residues: MIEYRIEEAIARYREYYEFKPARESAGIEDVRSAIEHTNLKPFATPDDIKKLCLEARENRFYGVCVNPCYVKLAREELEGTDVKVVTVVGFPLGANETRTKAHEAIFAVESGADEIDMVINVGMLKAKEWEYVYEDIRSVVESVKGKVVKVIIETCYLDTEEKIAACVISKLAGAHFVKTSTGFGTGGATAEDVHLMKWIVGDEMGVKASGGIRTFEDAVKMIMYGADRIGTSSGVKIVQGGEERYGG.

Aspartate 117 acts as the Proton donor/acceptor in catalysis. The active-site Schiff-base intermediate with acetaldehyde is lysine 179. Residue lysine 208 is the Proton donor/acceptor of the active site.

Belongs to the DeoC/FbaB aldolase family. DeoC type 1 subfamily.

The protein resides in the cytoplasm. It carries out the reaction 2-deoxy-D-ribose 5-phosphate = D-glyceraldehyde 3-phosphate + acetaldehyde. Its pathway is carbohydrate degradation; 2-deoxy-D-ribose 1-phosphate degradation; D-glyceraldehyde 3-phosphate and acetaldehyde from 2-deoxy-alpha-D-ribose 1-phosphate: step 2/2. Its function is as follows. Catalyzes a reversible aldol reaction between acetaldehyde and D-glyceraldehyde 3-phosphate to generate 2-deoxy-D-ribose 5-phosphate. The sequence is that of Deoxyribose-phosphate aldolase from Thermotoga petrophila (strain ATCC BAA-488 / DSM 13995 / JCM 10881 / RKU-1).